The chain runs to 37 residues: Large ribosomal subunit protein bL36 (37 aa).

It belongs to the bacterial ribosomal protein bL36 family.

The sequence is that of Large ribosomal subunit protein bL36 from Mycoplasma genitalium (strain ATCC 33530 / DSM 19775 / NCTC 10195 / G37) (Mycoplasmoides genitalium).